We begin with the raw amino-acid sequence, 87 residues long: UPF0367 protein P9303_26451 (87 aa).

The protein belongs to the UPF0367 family.

The polypeptide is UPF0367 protein P9303_26451 (Prochlorococcus marinus (strain MIT 9303)).